Consider the following 60-residue polypeptide: UPF0434 protein ECA2555 (60 aa).

The protein belongs to the UPF0434 family.

This Pectobacterium atrosepticum (strain SCRI 1043 / ATCC BAA-672) (Erwinia carotovora subsp. atroseptica) protein is UPF0434 protein ECA2555.